Consider the following 116-residue polypeptide: Cell division protein FtsL (116 aa).

Topologically, residues 1–24 (MMLTNRQIRVRLFESLKNSFFKKT) are cytoplasmic. A helical transmembrane segment spans residues 25-45 (VGISFALLFILLITAFSLIVV). The Periplasmic portion of the chain corresponds to 46-116 (RFEYKLQLNE…NEQKEELNNE (71 aa)).

The protein belongs to the FtsL family. Part of a complex composed of FtsB, FtsL and FtsQ.

Its subcellular location is the cell inner membrane. In terms of biological role, essential cell division protein. May link together the upstream cell division proteins, which are predominantly cytoplasmic, with the downstream cell division proteins, which are predominantly periplasmic. This is Cell division protein FtsL from Francisella tularensis subsp. tularensis (strain SCHU S4 / Schu 4).